A 142-amino-acid polypeptide reads, in one-letter code: Putative transcriptional regulatory protein PF0535 (142 aa).

It belongs to the Tfx family.

Its function is as follows. Putative transcriptional regulator. The chain is Putative transcriptional regulatory protein PF0535 from Pyrococcus furiosus (strain ATCC 43587 / DSM 3638 / JCM 8422 / Vc1).